Consider the following 293-residue polypeptide: Diaminopimelate epimerase (293 aa).

2 residues coordinate substrate: Asn11 and Asn78. Cys87 (proton donor) is an active-site residue. Residues 88-89 (GN), Asn166, Asn202, and 220-221 (ER) each bind substrate. The active-site Proton acceptor is Cys229. Residue 230–231 (GT) participates in substrate binding.

Belongs to the diaminopimelate epimerase family. In terms of assembly, homodimer.

The protein resides in the cytoplasm. It carries out the reaction (2S,6S)-2,6-diaminopimelate = meso-2,6-diaminopimelate. It functions in the pathway amino-acid biosynthesis; L-lysine biosynthesis via DAP pathway; DL-2,6-diaminopimelate from LL-2,6-diaminopimelate: step 1/1. In terms of biological role, catalyzes the stereoinversion of LL-2,6-diaminopimelate (L,L-DAP) to meso-diaminopimelate (meso-DAP), a precursor of L-lysine and an essential component of the bacterial peptidoglycan. In Mycobacterium sp. (strain JLS), this protein is Diaminopimelate epimerase.